The following is a 430-amino-acid chain: tRNA(Ile)-lysidine synthase (430 aa).

21–26 (SGGLDS) is an ATP binding site.

This sequence belongs to the tRNA(Ile)-lysidine synthase family.

It localises to the cytoplasm. It carries out the reaction cytidine(34) in tRNA(Ile2) + L-lysine + ATP = lysidine(34) in tRNA(Ile2) + AMP + diphosphate + H(+). In terms of biological role, ligates lysine onto the cytidine present at position 34 of the AUA codon-specific tRNA(Ile) that contains the anticodon CAU, in an ATP-dependent manner. Cytidine is converted to lysidine, thus changing the amino acid specificity of the tRNA from methionine to isoleucine. This is tRNA(Ile)-lysidine synthase from Salmonella typhimurium (strain LT2 / SGSC1412 / ATCC 700720).